The chain runs to 384 residues: Multidrug/solvent efflux pump periplasmic linker protein MepA (384 aa).

Positions 1–22 (MQFKPAVTALVSAVALATLLSG) are cleaved as a signal peptide. Residue Cys-23 is the site of N-palmitoyl cysteine attachment. Cys-23 carries the S-diacylglycerol cysteine lipid modification. Positions 115 to 155 (LAERYKQLIDEQAVSKQEYDDANAKRLQAEASLKSAQIDLR) form a coiled coil. A disordered region spans residues 362 to 384 (ATNVKKPAGPDQANAAKADAKAE). The span at 368–378 (PAGPDQANAAK) shows a compositional bias: low complexity.

This sequence belongs to the membrane fusion protein (MFP) (TC 8.A.1) family.

The protein localises to the cell inner membrane. Its function is as follows. The periplasmic linker protein component of an organic solvent and antibiotic efflux pump; confers resistance to toluene, hexane, p-xylene, ampicillin, penicillin G, erythromycin, novobiocin and tetracycline. The protein is Multidrug/solvent efflux pump periplasmic linker protein MepA (mepA) of Pseudomonas putida (Arthrobacter siderocapsulatus).